The chain runs to 368 residues: Ubiquitin domain-containing protein UBFD1 (368 aa).

Residues 106 to 139 (SCDARGNLQPAPAQPPGDPAAQASVSNGEDAGGG) form a disordered region. One can recognise a Ubiquitin-like domain in the interval 143-218 (ELVDLKIIWN…IMVVGSTIND (76 aa)). The segment at 231–263 (QDAKAEENKKEPLCRQKQHRKVLDKGKPEDVMP) is disordered. Composition is skewed to basic and acidic residues over residues 233 to 244 (AKAEENKKEPLC) and 251 to 260 (KVLDKGKPED).

The chain is Ubiquitin domain-containing protein UBFD1 (Ubfd1) from Mus musculus (Mouse).